The following is a 505-amino-acid chain: Putative diacyglycerol O-acyltransferase MT0919 (505 aa).

The active-site Proton acceptor is H167.

It belongs to the long-chain O-acyltransferase family.

The catalysed reaction is an acyl-CoA + a 1,2-diacyl-sn-glycerol = a triacyl-sn-glycerol + CoA. The protein operates within glycerolipid metabolism; triacylglycerol biosynthesis. In Mycobacterium tuberculosis (strain CDC 1551 / Oshkosh), this protein is Putative diacyglycerol O-acyltransferase MT0919.